Consider the following 366-residue polypeptide: Chorismate synthase (366 aa).

Residues Arg48 and Arg54 each contribute to the NADP(+) site. FMN is bound by residues 125 to 127, 238 to 239, Gly278, 293 to 297, and Arg319; these read RSS, NA, and KPTSS.

Belongs to the chorismate synthase family. Homotetramer. It depends on FMNH2 as a cofactor.

It catalyses the reaction 5-O-(1-carboxyvinyl)-3-phosphoshikimate = chorismate + phosphate. The protein operates within metabolic intermediate biosynthesis; chorismate biosynthesis; chorismate from D-erythrose 4-phosphate and phosphoenolpyruvate: step 7/7. Catalyzes the anti-1,4-elimination of the C-3 phosphate and the C-6 proR hydrogen from 5-enolpyruvylshikimate-3-phosphate (EPSP) to yield chorismate, which is the branch point compound that serves as the starting substrate for the three terminal pathways of aromatic amino acid biosynthesis. This reaction introduces a second double bond into the aromatic ring system. The chain is Chorismate synthase from Burkholderia vietnamiensis (strain G4 / LMG 22486) (Burkholderia cepacia (strain R1808)).